Consider the following 523-residue polypeptide: Putative L-type lectin-domain containing receptor kinase V.6 (523 aa).

Positions 1–27 (MFSEVKVLQIVLVQWLTLFSFTYNSHG) are cleaved as a signal peptide. The segment at 28-242 (TYILDGSAVF…TGSIRALHYM (215 aa)) is legume-lectin like. Residues 28–279 (TYILDGSAVF…KPSDRLRTVL (252 aa)) lie on the Extracellular side of the membrane. N-linked (GlcNAc...) asparagine glycosylation is found at asparagine 47, asparagine 59, asparagine 112, and asparagine 171. The helical transmembrane segment at 280–300 (AVCLTLALFAVFLASGIGFVF) threads the bilayer. Over 301–523 (YLRHKKVKEV…TGRAVRVKFF (223 aa)) the chain is Cytoplasmic. The Protein kinase domain maps to 335–523 (FKEKQLLGKG…TGRAVRVKFF (189 aa)). ATP is bound by residues 341–349 (LGKGGFGQV) and lysine 364. Aspartate 464 serves as the catalytic Proton acceptor.

The protein in the C-terminal section; belongs to the protein kinase superfamily. Ser/Thr protein kinase family. This sequence in the N-terminal section; belongs to the leguminous lectin family.

The protein resides in the cell membrane. The enzyme catalyses L-seryl-[protein] + ATP = O-phospho-L-seryl-[protein] + ADP + H(+). It catalyses the reaction L-threonyl-[protein] + ATP = O-phospho-L-threonyl-[protein] + ADP + H(+). The chain is Putative L-type lectin-domain containing receptor kinase V.6 (LECRK56) from Arabidopsis thaliana (Mouse-ear cress).